The following is a 682-amino-acid chain: Potassium-transporting ATPase ATP-binding subunit (682 aa).

4 consecutive transmembrane segments (helical) span residues 34-54 (PVMF…LAMV), 58-78 (IAGS…TVLF), 219-239 (IALT…TATL), and 254-274 (VLVA…LSAI). D307 functions as the 4-aspartylphosphate intermediate in the catalytic mechanism. Residues D344, E348, 377 to 384 (FTAQSRMS), and K395 contribute to the ATP site. Mg(2+) contacts are provided by D518 and D522. The next 3 membrane-spanning stretches (helical) occupy residues 588–608 (FAII…LNVM), 616–636 (AILS…PLAL), and 662–682 (LVVP…LGLA).

This sequence belongs to the cation transport ATPase (P-type) (TC 3.A.3) family. Type IA subfamily. The system is composed of three essential subunits: KdpA, KdpB and KdpC.

The protein resides in the cell inner membrane. The catalysed reaction is K(+)(out) + ATP + H2O = K(+)(in) + ADP + phosphate + H(+). Its function is as follows. Part of the high-affinity ATP-driven potassium transport (or Kdp) system, which catalyzes the hydrolysis of ATP coupled with the electrogenic transport of potassium into the cytoplasm. This subunit is responsible for energy coupling to the transport system and for the release of the potassium ions to the cytoplasm. In Salmonella paratyphi B (strain ATCC BAA-1250 / SPB7), this protein is Potassium-transporting ATPase ATP-binding subunit.